Consider the following 178-residue polypeptide: UPF0228 protein MA_4223 (178 aa).

The protein belongs to the UPF0228 family.

The chain is UPF0228 protein MA_4223 from Methanosarcina acetivorans (strain ATCC 35395 / DSM 2834 / JCM 12185 / C2A).